The following is a 462-amino-acid chain: Nitrate/nitrite transporter NarU (462 aa).

Topologically, residues 1–35 (MALQNEKNSRYLLRDWKPENPAFWENKGKHIARRN) are cytoplasmic. Residues 36 to 56 (LWISVSCLLLAFCVWMLFSAV) form a helical membrane-spanning segment. The Periplasmic segment spans residues 57-76 (TVNLNKIGFNFTTDQLFLLT). The chain crosses the membrane as a helical span at residues 77–97 (ALPSVSGALLRVPYSFMVPIF). Topologically, residues 98–101 (GGRR) are cytoplasmic. The chain crosses the membrane as a helical span at residues 102–122 (WTVFSTAILIIPCVWLGIAVQ). Topologically, residues 123-125 (NPN) are periplasmic. The chain crosses the membrane as a helical span at residues 126 to 146 (TPFGIFIVIALLCGFAGANFA). At 147–180 (SSMGNISFFFPKAKQGSALGINGGLGNLGVSVMQ) the chain is on the cytoplasmic side. A helical membrane pass occupies residues 181–201 (LVAPLVIFVPVFAFLGVNGVP). The Periplasmic portion of the chain corresponds to 202–206 (QADGS). Residues 207–227 (VMSLANAAWIWVPLLAIATIA) traverse the membrane as a helical segment. The Cytoplasmic segment spans residues 228–258 (AWSGMNDIASSRASIADQLPVLQRLHLWLLS). A helical membrane pass occupies residues 259–279 (LLYLATFGSFIGFSAGFAMLA). The Periplasmic segment spans residues 280–287 (KTQFPDVN). A helical transmembrane segment spans residues 288–308 (ILRLAFFGPFIGAIARSVGGA). The Cytoplasmic portion of the chain corresponds to 309–317 (ISDKFGGVR). Residues 318 to 338 (VTLINFIFMAIFSALLFLTLP) form a helical membrane-spanning segment. At 339 to 344 (GTGSGN) the chain is on the periplasmic side. A helical membrane pass occupies residues 345 to 365 (FIAFYAVFMGLFLTAGLGSGS). At 366 to 401 (TFQMIAVIFRQITIYRVKMKGGSDEQAHKEAVTETA) the chain is on the cytoplasmic side. The helical transmembrane segment at 402–422 (AALGFISAIGAVGGFFIPQAF) threads the bilayer. Over 423-432 (GMSLNMTGSP) the chain is Periplasmic. Residues 433–453 (VGAMKVFLIFYIVCVLLTWLV) traverse the membrane as a helical segment. Residues 454–462 (YGRRKFSQK) are Cytoplasmic-facing.

It belongs to the major facilitator superfamily. Nitrate/nitrite porter (TC 2.A.1.8) family.

The protein resides in the cell inner membrane. Its function is as follows. Catalyzes nitrate uptake, nitrite uptake and nitrite export across the cytoplasmic membrane. May function as a nitrate/H(+) and nitrite/H(+) channel. Could confer a selective advantage during severe nutrient starvation or slow growth. This is Nitrate/nitrite transporter NarU (narU) from Escherichia coli (strain K12).